Here is a 428-residue protein sequence, read N- to C-terminus: Delta-aminolevulinic acid dehydratase, chloroplastic (428 aa).

Lysine 294 (schiff-base intermediate with substrate) is an active-site residue. 5-aminolevulinate is bound by residues arginine 304 and lysine 316. Residue glutamate 332 participates in Mg(2+) binding. Catalysis depends on lysine 347, which acts as the Schiff-base intermediate with substrate. Serine 373 and tyrosine 412 together coordinate 5-aminolevulinate.

Belongs to the ALAD family. As to quaternary structure, homooctamer. Requires Mg(2+) as cofactor.

It is found in the plastid. It localises to the chloroplast. The catalysed reaction is 2 5-aminolevulinate = porphobilinogen + 2 H2O + H(+). It participates in porphyrin-containing compound metabolism; protoporphyrin-IX biosynthesis; coproporphyrinogen-III from 5-aminolevulinate: step 1/4. Its function is as follows. Catalyzes an early step in the biosynthesis of tetrapyrroles. Binds two molecules of 5-aminolevulinate per subunit, each at a distinct site, and catalyzes their condensation to form porphobilinogen. The chain is Delta-aminolevulinic acid dehydratase, chloroplastic (HEMB) from Hordeum vulgare (Barley).